The chain runs to 273 residues: SPRY domain-containing SOCS box protein 4 (273 aa).

The region spanning 34–233 is the B30.2/SPRY domain; it reads PARLDQLLDM…MRYINGLDPE (200 aa). The SOCS box domain occupies 234-273; that stretch reads PLPLMDLCRRSIRSALGRQRLRDIGSLPLPQSLKNYLQYQ.

The protein belongs to the SPSB family. In terms of assembly, component of the probable ECS(SPSB4) E3 ubiquitin-protein ligase complex which contains CUL5, RNF7/RBX2, Elongin BC complex and SPSB4. Interacts with CUL5; RNF7; ELOB and ELOC. Interacts with MET. Interacts (via B30.2/SPRY domain) with PAWR; this interaction occurs in association with the Elongin BC complex. Interacts with NOS2. Interacts with EPHB2.

The protein localises to the cytoplasm. It localises to the cytosol. Its pathway is protein modification; protein ubiquitination. In terms of biological role, substrate recognition component of a SCF-like ECS (Elongin BC-CUL2/5-SOCS-box protein) E3 ubiquitin-protein ligase complex which mediates the ubiquitination and subsequent proteasomal degradation of target proteins. Negatively regulates nitric oxide (NO) production and limits cellular toxicity in activated macrophages by mediating the ubiquitination and proteasomal degradation of NOS2. Acts as a bridge which links NOS2 with the ECS E3 ubiquitin ligase complex components ELOC and CUL5. Diminishes EphB2-dependent cell repulsive responses by mediating the ubiquitination and degradation of the EphB2/CTF2. Regulates cellular clock function by mediating ubiquitination and proteasomal degradation of the circadian transcriptional repressor NR1D1. The sequence is that of SPRY domain-containing SOCS box protein 4 (Spsb4) from Mus musculus (Mouse).